Reading from the N-terminus, the 313-residue chain is tRNA dimethylallyltransferase (313 aa).

Position 20 to 27 (20 to 27 (GPTGTGKS)) interacts with ATP. Residue 22 to 27 (TGTGKS) participates in substrate binding.

The protein belongs to the IPP transferase family. In terms of assembly, monomer. Mg(2+) serves as cofactor.

It carries out the reaction adenosine(37) in tRNA + dimethylallyl diphosphate = N(6)-dimethylallyladenosine(37) in tRNA + diphosphate. Functionally, catalyzes the transfer of a dimethylallyl group onto the adenine at position 37 in tRNAs that read codons beginning with uridine, leading to the formation of N6-(dimethylallyl)adenosine (i(6)A). The polypeptide is tRNA dimethylallyltransferase (Kocuria rhizophila (strain ATCC 9341 / DSM 348 / NBRC 103217 / DC2201)).